Reading from the N-terminus, the 185-residue chain is ATP-dependent protease subunit HslV (185 aa).

T2 is a catalytic residue. Na(+) contacts are provided by G157, C160, and T163.

Belongs to the peptidase T1B family. HslV subfamily. A double ring-shaped homohexamer of HslV is capped on each side by a ring-shaped HslU homohexamer. The assembly of the HslU/HslV complex is dependent on binding of ATP.

It localises to the cytoplasm. It catalyses the reaction ATP-dependent cleavage of peptide bonds with broad specificity.. With respect to regulation, allosterically activated by HslU binding. Functionally, protease subunit of a proteasome-like degradation complex believed to be a general protein degrading machinery. This chain is ATP-dependent protease subunit HslV, found in Vibrio cholerae serotype O1 (strain ATCC 39315 / El Tor Inaba N16961).